Reading from the N-terminus, the 66-residue chain is Large ribosomal subunit protein uL29 (66 aa).

It belongs to the universal ribosomal protein uL29 family.

The polypeptide is Large ribosomal subunit protein uL29 (Brucella abortus (strain S19)).